Reading from the N-terminus, the 416-residue chain is Multifunctional CCA protein (416 aa).

ATP contacts are provided by glycine 8 and arginine 11. CTP contacts are provided by glycine 8 and arginine 11. 2 residues coordinate Mg(2+): aspartate 21 and aspartate 23. Residues arginine 91, arginine 137, and arginine 140 each contribute to the ATP site. Arginine 91, arginine 137, and arginine 140 together coordinate CTP. The 108-residue stretch at 228–335 (SFIHTMLVLK…ITLFNRFDVW (108 aa)) folds into the HD domain.

Belongs to the tRNA nucleotidyltransferase/poly(A) polymerase family. Bacterial CCA-adding enzyme type 1 subfamily. In terms of assembly, monomer. Can also form homodimers and oligomers. Mg(2+) is required as a cofactor. It depends on Ni(2+) as a cofactor.

The enzyme catalyses a tRNA precursor + 2 CTP + ATP = a tRNA with a 3' CCA end + 3 diphosphate. The catalysed reaction is a tRNA with a 3' CCA end + 2 CTP + ATP = a tRNA with a 3' CCACCA end + 3 diphosphate. Functionally, catalyzes the addition and repair of the essential 3'-terminal CCA sequence in tRNAs without using a nucleic acid template. Adds these three nucleotides in the order of C, C, and A to the tRNA nucleotide-73, using CTP and ATP as substrates and producing inorganic pyrophosphate. tRNA 3'-terminal CCA addition is required both for tRNA processing and repair. Also involved in tRNA surveillance by mediating tandem CCA addition to generate a CCACCA at the 3' terminus of unstable tRNAs. While stable tRNAs receive only 3'-terminal CCA, unstable tRNAs are marked with CCACCA and rapidly degraded. The chain is Multifunctional CCA protein from Haemophilus influenzae (strain PittGG).